We begin with the raw amino-acid sequence, 784 residues long: LPS-assembly protein LptD (784 aa).

The N-terminal stretch at 1–24 (MKKRIPTLLATMIASALYSHQGLA) is a signal peptide. Disulfide bonds link C31/C724 and C173/C725.

Belongs to the LptD family. In terms of assembly, component of the lipopolysaccharide transport and assembly complex. Interacts with LptE and LptA. In terms of processing, contains two intramolecular disulfide bonds.

Its subcellular location is the cell outer membrane. Together with LptE, is involved in the assembly of lipopolysaccharide (LPS) at the surface of the outer membrane. This chain is LPS-assembly protein LptD, found in Salmonella typhi.